We begin with the raw amino-acid sequence, 212 residues long: Cytidylate kinase (212 aa).

7–15 (GPAASGKGT) contributes to the ATP binding site.

This sequence belongs to the cytidylate kinase family. Type 1 subfamily.

The protein resides in the cytoplasm. The catalysed reaction is CMP + ATP = CDP + ADP. It carries out the reaction dCMP + ATP = dCDP + ADP. This Rhodopseudomonas palustris (strain HaA2) protein is Cytidylate kinase.